Here is a 423-residue protein sequence, read N- to C-terminus: Serine incorporator 5 (423 aa).

Over 1–36 the chain is Extracellular; the sequence is MSAQCCAGQLACCCGSAGCSLCCDCCPRIRQSLSTR. Residues 37–57 form a helical membrane-spanning segment; that stretch reads FMYALYFILVVVLCCIMMSTT. The Cytoplasmic portion of the chain corresponds to 58 to 89; that stretch reads VAHKMKEHIPFFEDMCKGIKAGDTCEKLVGYS. A helical membrane pass occupies residues 90 to 110; the sequence is AVYRVCFGMACFFFIFCLLTL. Topologically, residues 111–124 are extracellular; that stretch reads KINNSKSCRAHIHN. N113 is a glycosylation site (N-linked (GlcNAc...) asparagine). Residues 125-145 form a helical membrane-spanning segment; the sequence is GFWFFKLLLLGAMCSGAFFIP. Residues 146–156 are Cytoplasmic-facing; sequence DQDTFLNAWRY. A helical membrane pass occupies residues 157–177; it reads VGAVGGFLFIGIQLLLLVEFA. The Extracellular portion of the chain corresponds to 178-198; the sequence is HKWNKNWTAGTASNKLWYASL. N183 carries N-linked (GlcNAc...) asparagine glycosylation. A helical membrane pass occupies residues 199–219; the sequence is ALVTLIMYSIATGGLVLMAVF. Over 220-230 the chain is Cytoplasmic; the sequence is YTQKDSCMENK. A helical transmembrane segment spans residues 231 to 251; sequence ILLGVNGGLCLLISLVAISPW. The Extracellular portion of the chain corresponds to 252–258; that stretch reads VQNRQPH. Residues 259-279 form a helical membrane-spanning segment; the sequence is SGLLQSGVISCYVTYLTFSAL. Over 280–311 the chain is Cytoplasmic; sequence SSKPAEVVLDEHGKNVTICVPDFGQDLYRDEN. Residues 312–332 form a helical membrane-spanning segment; that stretch reads LVTILGTSLLIGCILYSCLTS. Residues 333–385 are Extracellular-facing; that stretch reads TTRSSSDALQGRYAAPELEIARCCFCFSPGGEDTEEQQPGKEGPRVIYDEKKG. Residues 386 to 406 traverse the membrane as a helical segment; that stretch reads TVYIYSYFHFVFFLASLYVMM. Topologically, residues 407-423 are cytoplasmic; that stretch reads TVTNWFNHVRSAFHLLP.

Belongs to the TDE1 family. In terms of tissue distribution, highly expressed in placenta, skeletal muscle, spleen, thymus, testis and peripheral leukocyte and is expressed weakly in the heart, liver and fetal brain.

The protein resides in the cell membrane. Its subcellular location is the cytoplasm. The protein localises to the perinuclear region. The enzyme catalyses a 1,2-diacyl-sn-glycero-3-phospho-L-serine(in) = a 1,2-diacyl-sn-glycero-3-phospho-L-serine(out). It carries out the reaction a 1,2-diacyl-sn-glycero-3-phosphocholine(in) = a 1,2-diacyl-sn-glycero-3-phosphocholine(out). The catalysed reaction is a 1,2-diacyl-sn-glycero-3-phosphoethanolamine(in) = a 1,2-diacyl-sn-glycero-3-phosphoethanolamine(out). Functionally, restriction factor required to restrict infectivity of lentiviruses, such as HIV-1: acts by inhibiting an early step of viral infection. Impairs the penetration of the viral particle into the cytoplasm. Non-ATP-dependent, non-specific lipid transporter for phosphatidylserine, phosphatidylcholine, and phosphatidylethanolamine. Functions as a scramblase that flips lipids in both directions across the membrane. Phospholipid scrambling results in HIV-1 surface exposure of phosphatidylserine and loss of membrane asymmetry, which leads to changes in HIV-1 Env conformation and loss of infectivity. Enhances the incorporation of serine into phosphatidylserine and sphingolipids. May play a role in providing serine molecules for the formation of myelin glycosphingolipids in oligodendrocytes. The polypeptide is Serine incorporator 5 (Homo sapiens (Human)).